Reading from the N-terminus, the 367-residue chain is UDP-N-acetylglucosamine--N-acetylmuramyl-(pentapeptide) pyrophosphoryl-undecaprenol N-acetylglucosamine transferase (367 aa).

UDP-N-acetyl-alpha-D-glucosamine-binding positions include 11–13 (TAG), N125, R163, S197, and Q289.

The protein belongs to the glycosyltransferase 28 family. MurG subfamily.

The protein localises to the cell membrane. The catalysed reaction is di-trans,octa-cis-undecaprenyl diphospho-N-acetyl-alpha-D-muramoyl-L-alanyl-D-glutamyl-meso-2,6-diaminopimeloyl-D-alanyl-D-alanine + UDP-N-acetyl-alpha-D-glucosamine = di-trans,octa-cis-undecaprenyl diphospho-[N-acetyl-alpha-D-glucosaminyl-(1-&gt;4)]-N-acetyl-alpha-D-muramoyl-L-alanyl-D-glutamyl-meso-2,6-diaminopimeloyl-D-alanyl-D-alanine + UDP + H(+). Its pathway is cell wall biogenesis; peptidoglycan biosynthesis. Functionally, cell wall formation. Catalyzes the transfer of a GlcNAc subunit on undecaprenyl-pyrophosphoryl-MurNAc-pentapeptide (lipid intermediate I) to form undecaprenyl-pyrophosphoryl-MurNAc-(pentapeptide)GlcNAc (lipid intermediate II). This is UDP-N-acetylglucosamine--N-acetylmuramyl-(pentapeptide) pyrophosphoryl-undecaprenol N-acetylglucosamine transferase from Clavibacter michiganensis subsp. michiganensis (strain NCPPB 382).